Here is a 160-residue protein sequence, read N- to C-terminus: 2-C-methyl-D-erythritol 2,4-cyclodiphosphate synthase (160 aa).

2 residues coordinate a divalent metal cation: Asp-11 and His-13. 4-CDP-2-C-methyl-D-erythritol 2-phosphate-binding positions include 11–13 (DVH) and 37–38 (HS). A divalent metal cation is bound at residue His-45. Residues 59 to 61 (DIG), 64 to 68 (FPDTD), 135 to 138 (TTTE), Phe-142, and Arg-145 contribute to the 4-CDP-2-C-methyl-D-erythritol 2-phosphate site.

This sequence belongs to the IspF family. Homotrimer. A divalent metal cation serves as cofactor.

It catalyses the reaction 4-CDP-2-C-methyl-D-erythritol 2-phosphate = 2-C-methyl-D-erythritol 2,4-cyclic diphosphate + CMP. Its pathway is isoprenoid biosynthesis; isopentenyl diphosphate biosynthesis via DXP pathway; isopentenyl diphosphate from 1-deoxy-D-xylulose 5-phosphate: step 4/6. Functionally, involved in the biosynthesis of isopentenyl diphosphate (IPP) and dimethylallyl diphosphate (DMAPP), two major building blocks of isoprenoid compounds. Catalyzes the conversion of 4-diphosphocytidyl-2-C-methyl-D-erythritol 2-phosphate (CDP-ME2P) to 2-C-methyl-D-erythritol 2,4-cyclodiphosphate (ME-CPP) with a corresponding release of cytidine 5-monophosphate (CMP). The chain is 2-C-methyl-D-erythritol 2,4-cyclodiphosphate synthase from Alcanivorax borkumensis (strain ATCC 700651 / DSM 11573 / NCIMB 13689 / SK2).